The primary structure comprises 1520 residues: Glutamate synthase [NADPH] large chain (1520 aa).

Cys-22 (for GATase activity) is an active-site residue. The region spanning 22 to 415 (CGIGLYAHLK…PGKMLLIDLE (394 aa)) is the Glutamine amidotransferase type-2 domain. Positions 890–913 (GGKSNSGEGGEDPKRFVPDENGDD) are disordered. Basic and acidic residues predominate over residues 900–913 (EDPKRFVPDENGDD). Position 1060 to 1112 (1060 to 1112 (LAEAHQTLMLNGLRDRVVLETDGKLMTGRDVVMAALLGAEEFGFATAPLVVLG)) interacts with FMN. Residues Cys-1113, Cys-1119, and Cys-1124 each contribute to the [3Fe-4S] cluster site.

Belongs to the glutamate synthase family. In terms of assembly, aggregate of 4 catalytic active heterodimers, consisting of a large and a small subunit. [3Fe-4S] cluster serves as cofactor. The cofactor is FAD. FMN is required as a cofactor.

It carries out the reaction 2 L-glutamate + NADP(+) = L-glutamine + 2-oxoglutarate + NADPH + H(+). It participates in amino-acid biosynthesis; L-glutamate biosynthesis via GLT pathway; L-glutamate from 2-oxoglutarate and L-glutamine (NADP(+) route): step 1/1. The protein operates within energy metabolism; nitrogen metabolism. This Bacillus subtilis (strain 168) protein is Glutamate synthase [NADPH] large chain (gltA).